A 975-amino-acid polypeptide reads, in one-letter code: Chromosome transmission fidelity protein 18 homolog (975 aa).

2 disordered regions span residues 30-83 (EGAS…KRQV) and 114-141 (SEEMEEPPPPDSSPTDITPPPSPEDLAE). T51 is modified (phosphothreonine). Positions 58–77 (RGDAASSPAPAASVGSSQGG) are enriched in low complexity. S64 carries the post-translational modification Phosphoserine. A compositionally biased stretch (pro residues) spans 122-136 (PPDSSPTDITPPPSP). Residue S225 is modified to Phosphoserine. Disordered stretches follow at residues 246–276 (SDTLHSLRSGEEEAAQPLGAPEEEPTDGQDA) and 320–346 (RPSRKPRPSVEPARVSKEATAPGKWKS). 374–381 (GPPGLGKT) lines the ATP pocket. Positions 858-896 (ASARVENSPQVDGSPPGLEGLLGGIGEKGVHRPAPRNHE) are disordered. A Phosphoserine modification is found at S871.

It belongs to the activator 1 small subunits family. CTF18 subfamily. As to quaternary structure, component of the CTF18-RFC complex, which consists of CTF18, CTF8, DCC1, RFC2, RFC3, RFC4 and RFC5. During assembly of the CTF18-RFC complex, CTF18 may first assemble into a subcomplex with RFC2, RFC3, RFC4 and RFC5. CTF18 then interacts directly with CTF8, which in turn interacts with DCC1. The CTF18-RFC complex associates with PCNA and with DNA polymerase POLH. The CTF18-RFC complex does not interact with the Rad9/Rad1/Hus1 complex. CTF18 interacts with SMC1A and RAD21. Interacts with DDX11.

The protein localises to the nucleus. Its function is as follows. Chromosome cohesion factor involved in sister chromatid cohesion and fidelity of chromosome transmission. Component of one of the cell nuclear antigen loader complexes, CTF18-replication factor C (CTF18-RFC), which consists of CTF18, CTF8, DCC1, RFC2, RFC3, RFC4 and RFC5. The CTF18-RFC complex binds to single-stranded and primed DNAs and has weak ATPase activity that is stimulated by the presence of primed DNA, replication protein A (RPA) and by proliferating cell nuclear antigen (PCNA). The CTF18-RFC complex catalyzes the ATP-dependent loading of PCNA onto primed and gapped DNA. Interacts with and stimulates DNA polymerase POLH. During DNA repair synthesis, involved in loading DNA polymerase POLE at the sites of local damage. This chain is Chromosome transmission fidelity protein 18 homolog (CHTF18), found in Homo sapiens (Human).